The primary structure comprises 557 residues: Fatty acyl-CoA hydrolase precursor, medium chain (557 aa).

Residues 1-25 (MATEKNTLLSLILTAGITALVATGQ) form the signal peptide. A disulfide bridge links cysteine 93 with cysteine 122. Serine 227 functions as the Acyl-ester intermediate in the catalytic mechanism. Residues glutamate 345 and histidine 460 each act as charge relay system in the active site. N-linked (GlcNAc...) asparagine glycosylation occurs at asparagine 476.

It belongs to the type-B carboxylesterase/lipase family. As to expression, highest levels in uropygial gland, much lower in liver and kidney.

Fatty acid biosynthesis chain termination and release of the free fatty acid product is achieved by hydrolysis of the thio ester by a thioesterase. This thioesterase may be associated with peroxisome proliferation and may play a role in the production of 3-hydroxy fatty acid diester pheromones. This is Fatty acyl-CoA hydrolase precursor, medium chain from Anas platyrhynchos (Mallard).